The following is a 534-amino-acid chain: C-type lectin domain family 18 member A (534 aa).

Residues 47–88 (GALPVAGKPEPMARSLASAPVSPWHHMDRGSTTPAKARSHSA) are disordered. One can recognise an SCP domain in the interval 139 to 270 (LTAHNRLRSR…EAMEAFVCAY (132 aa)). Residues 316–349 (PRNPCRMSCRNLGHLNISTCRCHCQPGYTGRYCQ) enclose the EGF-like domain. Disulfide bonds link cysteine 324-cysteine 337, cysteine 339-cysteine 348, cysteine 415-cysteine 520, and cysteine 496-cysteine 512. Positions 394–521 (IDGDCFMVSP…CKTRNRYICQ (128 aa)) constitute a C-type lectin domain.

It localises to the secreted. The sequence is that of C-type lectin domain family 18 member A (Clec18a) from Mus musculus (Mouse).